A 348-amino-acid polypeptide reads, in one-letter code: Rhodopsin (348 aa).

At methionine 1 the chain carries N-acetylmethionine. The Extracellular segment spans residues 1–36 (MNGTEGLNFYVPFSNKTGVVRSPFEYPQYYLAEPWQ). Asparagine 2 and asparagine 15 each carry an N-linked (GlcNAc...) asparagine glycan. A helical membrane pass occupies residues 37–61 (FSVLAAYMFLLIVLGFPINFLTLYV). Residues 62 to 73 (TVQHKKLRTPLN) lie on the Cytoplasmic side of the membrane. Residues 74–99 (YILLNLAVANLFMVFGGFTTTLYTSL) form a helical membrane-spanning segment. Topologically, residues 100 to 111 (HAYFVFGPTGCN) are extracellular. The cysteines at positions 110 and 187 are disulfide-linked. A helical transmembrane segment spans residues 112–133 (LEGFFATLGGEIALWSLVVLAI). Residues 134–136 (ERY) carry the 'Ionic lock' involved in activated form stabilization motif. At 134–152 (ERYVVVCKPMSNFRFGENH) the chain is on the cytoplasmic side. Residues 153–173 (AIMGLALTWIMAMACAAAPLV) form a helical membrane-spanning segment. At 174-202 (GWSRYIPEGMQCSCGIDYYTSRQEVNNES) the chain is on the extracellular side. Glutamate 201 serves as a coordination point for Zn(2+). A helical transmembrane segment spans residues 203–227 (FVIYMFVVHFTIPLVIIFFCYGQLV). The Cytoplasmic portion of the chain corresponds to 228-252 (FTVKEAAAQQQESATTQKAEKEVTR). The chain crosses the membrane as a helical span at residues 253–274 (MVIIMVVAFLICWVPYASVAFY). Over 275-286 (IFTHQGSDFGPI) the chain is Extracellular. Residue glutamine 279 coordinates Zn(2+). A helical membrane pass occupies residues 287–306 (FMTIPSFFAKSSSIYNPVIY). At lysine 296 the chain carries N6-(retinylidene)lysine. Residues 307-348 (IMMNKQFRNCMLTTLCCGRNPLGDDEASTTASKTETSQVAPA) are Cytoplasmic-facing. Residues cysteine 322 and cysteine 323 are each lipidated (S-palmitoyl cysteine). Serine 334 bears the Phosphoserine mark. Phosphothreonine occurs at positions 335 and 336. Phosphoserine is present on serine 338. Residues threonine 340 and threonine 342 each carry the phosphothreonine modification. Phosphoserine is present on serine 343.

This sequence belongs to the G-protein coupled receptor 1 family. Opsin subfamily. In terms of assembly, homodimer. May form a complex composed of RHO, GRK1 and RCVRN in a Ca(2+)-dependent manner; RCVRN prevents the interaction between GRK1 and RHO. Interacts with GRK1. Interacts (phosphorylated form) with SAG. Interacts with GNAT1. Interacts with GNAT3. SAG and G-proteins compete for a common binding site. Interacts with PRCD; the interaction promotes PRCD stability. Forms a complex with ASAP1 and ARF4. Forms a complex with ASAP1, RAB11A, Rabin8/RAB3IP, ARF4 and RAB11FIP3; the complex regulates Golgi-to-cilia rhodopsin/RHO transport in photoreceptors. In terms of processing, contains one covalently linked retinal chromophore. Upon light absorption, the covalently bound 11-cis-retinal is converted to all-trans-retinal. After hydrolysis of the Schiff base and release of the covalently bound all-trans-retinal, active rhodopsin is regenerated by binding of a fresh molecule of 11-cis-retinal.

It localises to the membrane. The protein localises to the cell projection. It is found in the cilium. Its subcellular location is the photoreceptor outer segment. Functionally, photoreceptor required for image-forming vision at low light intensity. Light-induced isomerization of 11-cis to all-trans retinal triggers a conformational change that activates signaling via G-proteins. Signaling mediates the activation of phospholipase C. Subsequent receptor phosphorylation mediates displacement of the bound G-protein alpha subunit by arrestin and terminates signaling. The sequence is that of Rhodopsin (RHO) from Tursiops truncatus (Atlantic bottle-nosed dolphin).